Here is a 526-residue protein sequence, read N- to C-terminus: Keratin, type I cytoskeletal 10 (526 aa).

A compositionally biased stretch (low complexity) spans 1-16 (MSVRFSSNSRQYSSAR). The segment at 1 to 40 (MSVRFSSNSRQYSSARSGGGGGGGGGGSSIRVSSTKSSLG) is disordered. Residues 1–144 (MSVRFSSNSR…GDGGGLLSGN (144 aa)) are head. Residues serine 17, serine 38, serine 49, serine 52, and serine 169 each carry the phosphoserine modification. Gly residues predominate over residues 17 to 28 (SGGGGGGGGGGS). The coil 1A stretch occupies residues 145 to 180 (EKVTMQNLNDRLASYMNKVRDLEESNYELEGKIKEW). In terms of domain architecture, IF rod spans 145-459 (EKVTMQNLND…SLLEGEGGYV (315 aa)). The segment at 181–201 (YEKHGNSSQREPRDYSKYYKT) is linker 1. The coil 1B stretch occupies residues 202-293 (IEDLKGQIVN…KNHEEEMKDL (92 aa)). Residues 294–316 (QNVSTGDVNVEMNAAPGVDLTQL) are linker 12. The tract at residues 317 to 455 (LNNMRNQYEQ…QTYRSLLEGE (139 aa)) is coil 2. A tail region spans residues 456-526 (GGYVGNLQIT…IESETKKHFY (71 aa)).

Belongs to the intermediate filament family. Heterotetramer of two type I and two type II keratins. Heterodimer with KRT1. Two heterodimers of KRT1 and KRT10 form a heterotetramer. The KRT10 subunit in the heterotetramer is probably disulfide-linked.

The protein resides in the secreted. Its subcellular location is the extracellular space. The protein localises to the cell surface. It is found in the cytoplasm. Its function is as follows. Plays a role in the establishment of the epidermal barrier on plantar skin. Involved in the maintenance of cell layer development and keratin filament bundles in suprabasal cells of the epithelium. This is Keratin, type I cytoskeletal 10 from Rattus norvegicus (Rat).